We begin with the raw amino-acid sequence, 124 residues long: Phosphoribosyl-AMP cyclohydrolase (124 aa).

Asp82 serves as a coordination point for Mg(2+). Cys83 provides a ligand contact to Zn(2+). Asp84 and Asp86 together coordinate Mg(2+). Residues Cys99 and Cys106 each coordinate Zn(2+).

It belongs to the PRA-CH family. As to quaternary structure, homodimer. Mg(2+) is required as a cofactor. It depends on Zn(2+) as a cofactor.

The protein resides in the cytoplasm. The enzyme catalyses 1-(5-phospho-beta-D-ribosyl)-5'-AMP + H2O = 1-(5-phospho-beta-D-ribosyl)-5-[(5-phospho-beta-D-ribosylamino)methylideneamino]imidazole-4-carboxamide. It participates in amino-acid biosynthesis; L-histidine biosynthesis; L-histidine from 5-phospho-alpha-D-ribose 1-diphosphate: step 3/9. In terms of biological role, catalyzes the hydrolysis of the adenine ring of phosphoribosyl-AMP. The sequence is that of Phosphoribosyl-AMP cyclohydrolase from Zymomonas mobilis subsp. mobilis (strain ATCC 31821 / ZM4 / CP4).